The following is a 141-amino-acid chain: Small ribosomal subunit protein uS9c (141 aa).

The protein belongs to the universal ribosomal protein uS9 family.

Its subcellular location is the plastid. It is found in the chloroplast. This Tupiella akineta (Green alga) protein is Small ribosomal subunit protein uS9c (rps9).